The sequence spans 1169 residues: Pesticidal crystal protein Cry1Gb (1169 aa).

Belongs to the delta endotoxin family.

Functionally, promotes colloidosmotic lysis by binding to the midgut epithelial cells of lepidopteran larvae. Toxic to Pieris rapae. The polypeptide is Pesticidal crystal protein Cry1Gb (cry1Gb) (Bacillus thuringiensis subsp. wuhanensis).